Consider the following 179-residue polypeptide: Small ribosomal subunit protein uS5 (179 aa).

The S5 DRBM domain occupies 22–85 (MIEKLVAVNR…EYARKTMANV (64 aa)).

This sequence belongs to the universal ribosomal protein uS5 family. As to quaternary structure, part of the 30S ribosomal subunit. Contacts proteins S4 and S8.

In terms of biological role, with S4 and S12 plays an important role in translational accuracy. Functionally, located at the back of the 30S subunit body where it stabilizes the conformation of the head with respect to the body. The protein is Small ribosomal subunit protein uS5 of Xylella fastidiosa (strain 9a5c).